The chain runs to 201 residues: Orotate phosphoribosyltransferase (201 aa).

113 to 121 contacts 5-phospho-alpha-D-ribose 1-diphosphate; the sequence is EDIITTGKS. Residues Thr117 and Arg145 each contribute to the orotate site.

Belongs to the purine/pyrimidine phosphoribosyltransferase family. PyrE subfamily. Homodimer. It depends on Mg(2+) as a cofactor.

It catalyses the reaction orotidine 5'-phosphate + diphosphate = orotate + 5-phospho-alpha-D-ribose 1-diphosphate. The protein operates within pyrimidine metabolism; UMP biosynthesis via de novo pathway; UMP from orotate: step 1/2. Catalyzes the transfer of a ribosyl phosphate group from 5-phosphoribose 1-diphosphate to orotate, leading to the formation of orotidine monophosphate (OMP). This Helicobacter pylori (strain Shi470) protein is Orotate phosphoribosyltransferase.